The sequence spans 549 residues: Glucose-6-phosphate isomerase (549 aa).

The active-site Proton donor is Glu-355. Catalysis depends on residues His-386 and Lys-514.

The protein belongs to the GPI family.

The protein localises to the cytoplasm. It catalyses the reaction alpha-D-glucose 6-phosphate = beta-D-fructose 6-phosphate. Its pathway is carbohydrate biosynthesis; gluconeogenesis. It participates in carbohydrate degradation; glycolysis; D-glyceraldehyde 3-phosphate and glycerone phosphate from D-glucose: step 2/4. Its function is as follows. Catalyzes the reversible isomerization of glucose-6-phosphate to fructose-6-phosphate. The protein is Glucose-6-phosphate isomerase of Salmonella choleraesuis (strain SC-B67).